Reading from the N-terminus, the 226-residue chain is PKHD-type hydroxylase Pfl01_0799 (226 aa).

The Fe2OG dioxygenase domain occupies 78 to 178 (KVFPPLLNCY…RYASFFWTQS (101 aa)). H96, D98, and H159 together coordinate Fe cation. R169 contacts 2-oxoglutarate.

Fe(2+) serves as cofactor. It depends on L-ascorbate as a cofactor.

In Pseudomonas fluorescens (strain Pf0-1), this protein is PKHD-type hydroxylase Pfl01_0799.